We begin with the raw amino-acid sequence, 638 residues long: Chaperone protein DnaK (638 aa).

Thr-199 is modified (phosphothreonine; by autocatalysis). Residues 600–638 (EINQKKSEENLKKEDTSSESKKDENVVDAEFEEIKDPKK) are disordered. A compositionally biased stretch (basic and acidic residues) spans 602 to 624 (NQKKSEENLKKEDTSSESKKDEN).

Belongs to the heat shock protein 70 family.

Functionally, acts as a chaperone. This is Chaperone protein DnaK from Buchnera aphidicola subsp. Schizaphis graminum (strain Sg).